Reading from the N-terminus, the 333-residue chain is Cathepsin M (333 aa).

The N-terminal stretch at methionine 1–alanine 15 is a signal peptide. Positions leucine 16–asparagine 113 are cleaved as a propeptide — activation peptide. Intrachain disulfides connect cysteine 135/cysteine 178 and cysteine 169/cysteine 211. Cysteine 138 is an active-site residue. Residues asparagine 217, asparagine 221, and asparagine 268 are each glycosylated (N-linked (GlcNAc...) asparagine). A disulfide bridge connects residues cysteine 269 and cysteine 322. Active-site residues include histidine 276 and asparagine 300.

It belongs to the peptidase C1 family. In terms of tissue distribution, placenta.

It is found in the lysosome. The protein is Cathepsin M (Ctsm) of Mus musculus (Mouse).